Here is a 446-residue protein sequence, read N- to C-terminus: Sorting nexin-30 (446 aa).

The span at methionine 1 to leucine 18 shows a compositional bias: polar residues. The tract at residues methionine 1–leucine 84 is disordered. Positions threonine 70–leucine 84 are enriched in low complexity. Positions arginine 98 to serine 219 constitute a PX domain. Residues arginine 141, glutamine 143, lysine 171, and arginine 185 each coordinate a 1,2-diacyl-sn-glycero-3-phospho-(1D-myo-inositol-3-phosphate). The region spanning lysine 243–lysine 446 is the BAR domain.

It belongs to the sorting nexin family.

The protein localises to the early endosome membrane. Functionally, involved in the regulation of endocytosis and in several stages of intracellular trafficking. Together with snx4, involved in autophagosome assembly. The polypeptide is Sorting nexin-30 (snx30) (Xenopus tropicalis (Western clawed frog)).